An 814-amino-acid chain; its full sequence is Acyl-coenzyme A dehydrogenase (814 aa).

The Proton acceptor role is filled by Glu497.

The protein belongs to the acyl-CoA dehydrogenase family. Requires FAD as cofactor.

The enzyme catalyses a medium-chain 2,3-saturated fatty acyl-CoA + oxidized [electron-transfer flavoprotein] + H(+) = a medium-chain (2E)-enoyl-CoA + reduced [electron-transfer flavoprotein]. It carries out the reaction a long-chain 2,3-saturated fatty acyl-CoA + oxidized [electron-transfer flavoprotein] + H(+) = a long-chain (2E)-enoyl-CoA + reduced [electron-transfer flavoprotein]. It functions in the pathway lipid metabolism; fatty acid beta-oxidation. Functionally, catalyzes the dehydrogenation of acyl-coenzymes A (acyl-CoAs) to 2-enoyl-CoAs, the first step of the beta-oxidation cycle of fatty acid degradation. Is required for the utilization of medium- and long-chain fatty acids as sole carbon sources for growth. The protein is Acyl-coenzyme A dehydrogenase (fadE) of Escherichia coli O157:H7.